We begin with the raw amino-acid sequence, 165 residues long: Small ribosomal subunit protein uS5 (165 aa).

The 64-residue stretch at L10–V73 folds into the S5 DRBM domain.

Belongs to the universal ribosomal protein uS5 family. As to quaternary structure, part of the 30S ribosomal subunit. Contacts proteins S4 and S8.

Functionally, with S4 and S12 plays an important role in translational accuracy. In terms of biological role, located at the back of the 30S subunit body where it stabilizes the conformation of the head with respect to the body. The polypeptide is Small ribosomal subunit protein uS5 (Photobacterium profundum (strain SS9)).